We begin with the raw amino-acid sequence, 124 residues long: Fluoride-specific ion channel FluC (124 aa).

A run of 4 helical transmembrane segments spans residues 4–24 (IVLLGLAGALGSLARYGLAGL), 35–55 (LGTFIVNVLGCLAFGFVWGVC), 67–87 (VVLLTGFMGAFTTFSTFTFES), and 96–116 (WLAFALYAGGQLLLGLALLWL). Residues glycine 75 and threonine 78 each contribute to the Na(+) site.

This sequence belongs to the fluoride channel Fluc/FEX (TC 1.A.43) family.

It is found in the cell inner membrane. It catalyses the reaction fluoride(in) = fluoride(out). Its activity is regulated as follows. Na(+) is not transported, but it plays an essential structural role and its presence is essential for fluoride channel function. Fluoride-specific ion channel. Important for reducing fluoride concentration in the cell, thus reducing its toxicity. This chain is Fluoride-specific ion channel FluC, found in Nitratidesulfovibrio vulgaris (strain DSM 19637 / Miyazaki F) (Desulfovibrio vulgaris).